The primary structure comprises 424 residues: UDP-sugar transporter protein SLC35A5 (424 aa).

At 1-8 (MEKQCCSH) the chain is on the cytoplasmic side. A helical transmembrane segment spans residues 9–29 (PVICSLSTMYTFLLGAIFIAL). Residues 30–53 (SSSRILLVKYSANEENKYDYLPTT) lie on the Lumenal side of the membrane. The chain crosses the membrane as a helical span at residues 54–74 (VNVCSELVKLVFCVLVSFCVI). The Cytoplasmic portion of the chain corresponds to 75-93 (KKDHQSRNLKYASWKEFSD). Residues 94–116 (FMKWSIPAFLYFLDNLIVFYVLS) form a helical membrane-spanning segment. Over 117 to 119 (YLQ) the chain is Lumenal. Residues 120–142 (PAMAVIFSNFSIITTALLFRIVL) form a helical membrane-spanning segment. Residues 143 to 147 (KRRLN) are Cytoplasmic-facing. Residues 148-168 (WIQWASLLTLFLSIVALTAGT) traverse the membrane as a helical segment. Residues 169-228 (KTLQHNLAGRGFHHDAFFSPSNSCLLFRSECPRKDNCTAKEWTFPEAKWNTTARVFSHIR) are Lumenal-facing. Asparagine 204 carries N-linked (GlcNAc...) asparagine glycosylation. A helical transmembrane segment spans residues 229-249 (LGMGHVLIIVQCFISSMANIY). Residues 250-263 (NEKILKEGNQLTES) are Cytoplasmic-facing. The chain crosses the membrane as a helical span at residues 264–284 (IFIQNSKLYFFGILFNGLTLG). Over 285–303 (LQRSNRDQIKNCGFFYGHS) the chain is Lumenal. A helical transmembrane segment spans residues 304 to 324 (AFSVALIFVTAFQGLSVAFIL). At 325-330 (KFLDNM) the chain is on the cytoplasmic side. A helical membrane pass occupies residues 331–351 (FHVLMAQVTTVIITTVSVLVF). Over 352–354 (DFR) the chain is Lumenal. A helical membrane pass occupies residues 355 to 375 (PSLEFFLEAPSVLLSIFIYNA). Residues 376–424 (SKPQVPEYAPRQERIRDLSGNLWERSSGDGEELERLTKPKSDESDEDTF) lie on the Cytoplasmic side of the membrane. Phosphoserine is present on residues serine 394, serine 416, and serine 419. The tract at residues 397 to 424 (LWERSSGDGEELERLTKPKSDESDEDTF) is disordered. Residues 408-417 (LERLTKPKSD) are compositionally biased toward basic and acidic residues.

This sequence belongs to the nucleotide-sugar transporter family. SLC35A subfamily. As to quaternary structure, probably forms homooligomers and heterooligomers with SLC35A1, SLC35A2, SLC35A3 and SLC35A4.

The protein localises to the golgi apparatus membrane. It catalyses the reaction UMP(out) + UDP-alpha-D-glucuronate(in) = UMP(in) + UDP-alpha-D-glucuronate(out). The enzyme catalyses UMP(out) + UDP-N-acetyl-alpha-D-glucosamine(in) = UMP(in) + UDP-N-acetyl-alpha-D-glucosamine(out). The catalysed reaction is UDP-N-acetyl-alpha-D-galactosamine(in) + UMP(out) = UDP-N-acetyl-alpha-D-galactosamine(out) + UMP(in). Functionally, probable UDP-sugar:UMP transmembrane antiporter involved in UDP-alpha-D-glucuronate/UDP-GlcA, UDP-GlcNAc/UDP-N-acetyl-alpha-D-glucosamine and UDP-N-acetyl-alpha-D-galactosamine/UDP-GalNAc transport from the cytosol to the lumen of the Golgi. In Homo sapiens (Human), this protein is UDP-sugar transporter protein SLC35A5.